The following is a 369-amino-acid chain: Guanine nucleotide-binding protein subunit beta-2 (369 aa).

Residues M1–E24 are compositionally biased toward polar residues. Residues M1–E28 are disordered. WD repeat units lie at residues G79–D109, M121–P151, T167–D197, G209–D241, G253–D283, S297–D327, and G339–A369.

Belongs to the WD repeat G protein beta family. G proteins are composed of 3 units, alpha, beta and gamma. Interacts with G protein gamma subunits gpc-1 and gpc-2 and with egl-10 and eat-16.

In terms of biological role, guanine nucleotide-binding proteins (G proteins) are involved as a modulator or transducer in various transmembrane signaling systems. The beta and gamma chains are required for the GTPase activity, for replacement of GDP by GTP, and for G protein-effector interaction. Plays a role in regulating dopamine-mediated locomotion behavior. This is Guanine nucleotide-binding protein subunit beta-2 from Caenorhabditis elegans.